A 413-amino-acid polypeptide reads, in one-letter code: Multifunctional CCA protein (413 aa).

ATP is bound by residues Gly8 and Arg11. CTP is bound by residues Gly8 and Arg11. Mg(2+) contacts are provided by Asp21 and Asp23. 3 residues coordinate ATP: Arg91, Arg143, and Arg146. CTP contacts are provided by Arg91, Arg143, and Arg146. Residues 232–333 enclose the HD domain; sequence TGVHVMMVVD…VRFFERSDAL (102 aa).

This sequence belongs to the tRNA nucleotidyltransferase/poly(A) polymerase family. Bacterial CCA-adding enzyme type 1 subfamily. As to quaternary structure, monomer. Can also form homodimers and oligomers. It depends on Mg(2+) as a cofactor. Ni(2+) is required as a cofactor.

It catalyses the reaction a tRNA precursor + 2 CTP + ATP = a tRNA with a 3' CCA end + 3 diphosphate. The catalysed reaction is a tRNA with a 3' CCA end + 2 CTP + ATP = a tRNA with a 3' CCACCA end + 3 diphosphate. Its function is as follows. Catalyzes the addition and repair of the essential 3'-terminal CCA sequence in tRNAs without using a nucleic acid template. Adds these three nucleotides in the order of C, C, and A to the tRNA nucleotide-73, using CTP and ATP as substrates and producing inorganic pyrophosphate. tRNA 3'-terminal CCA addition is required both for tRNA processing and repair. Also involved in tRNA surveillance by mediating tandem CCA addition to generate a CCACCA at the 3' terminus of unstable tRNAs. While stable tRNAs receive only 3'-terminal CCA, unstable tRNAs are marked with CCACCA and rapidly degraded. This is Multifunctional CCA protein from Burkholderia ambifaria (strain MC40-6).